A 156-amino-acid chain; its full sequence is Aspartate 1-decarboxylase (156 aa).

Ser29 serves as the catalytic Schiff-base intermediate with substrate; via pyruvic acid. At Ser29 the chain carries Pyruvic acid (Ser). Thr61 serves as a coordination point for substrate. Tyr62 acts as the Proton donor in catalysis. 77 to 79 (GAA) contributes to the substrate binding site.

This sequence belongs to the PanD family. In terms of assembly, heterooctamer of four alpha and four beta subunits. Pyruvate serves as cofactor. In terms of processing, is synthesized initially as an inactive proenzyme, which is activated by self-cleavage at a specific serine bond to produce a beta-subunit with a hydroxyl group at its C-terminus and an alpha-subunit with a pyruvoyl group at its N-terminus.

The protein resides in the cytoplasm. It carries out the reaction L-aspartate + H(+) = beta-alanine + CO2. It participates in cofactor biosynthesis; (R)-pantothenate biosynthesis; beta-alanine from L-aspartate: step 1/1. In terms of biological role, catalyzes the pyruvoyl-dependent decarboxylation of aspartate to produce beta-alanine. The chain is Aspartate 1-decarboxylase from Rhodopirellula baltica (strain DSM 10527 / NCIMB 13988 / SH1).